The following is a 161-amino-acid chain: Pathogenesis-related protein 1 (161 aa).

An N-terminal signal peptide occupies residues 1 to 26; that stretch reads MNFTGYSRFLIVFVALVGALVLPSKA. One can recognise an SCP domain in the interval 34–149; it reads LRVHNQARGA…NGGTIISCNY (116 aa). Intrachain disulfides connect C70-C138, C113-C117, and C133-C147.

It belongs to the CRISP family.

It is found in the secreted. The protein resides in the extracellular space. Its subcellular location is the apoplast. Partially responsible for acquired pathogen resistance. In Arabidopsis thaliana (Mouse-ear cress), this protein is Pathogenesis-related protein 1.